Reading from the N-terminus, the 99-residue chain is NADH-quinone oxidoreductase subunit K 1 (99 aa).

3 helical membrane passes run 3–23, 28–48, and 59–79; these read PVNYLYLAALLFAIGASGVLV, IVVFMCVELMLNACNLALVTF, and IVAFFTMVVAAAEVVVGLAII.

This sequence belongs to the complex I subunit 4L family. In terms of assembly, NDH-1 is composed of 14 different subunits. Subunits NuoA, H, J, K, L, M, N constitute the membrane sector of the complex.

It is found in the cell membrane. It carries out the reaction a quinone + NADH + 5 H(+)(in) = a quinol + NAD(+) + 4 H(+)(out). Its function is as follows. NDH-1 shuttles electrons from NADH, via FMN and iron-sulfur (Fe-S) centers, to quinones in the respiratory chain. The immediate electron acceptor for the enzyme in this species is believed to be a menaquinone. Couples the redox reaction to proton translocation (for every two electrons transferred, four hydrogen ions are translocated across the cytoplasmic membrane), and thus conserves the redox energy in a proton gradient. The protein is NADH-quinone oxidoreductase subunit K 1 of Streptomyces griseus subsp. griseus (strain JCM 4626 / CBS 651.72 / NBRC 13350 / KCC S-0626 / ISP 5235).